A 115-amino-acid polypeptide reads, in one-letter code: Holo-[acyl-carrier-protein] synthase (115 aa).

2 residues coordinate Mg(2+): D6 and E51.

The protein belongs to the P-Pant transferase superfamily. AcpS family. Requires Mg(2+) as cofactor.

Its subcellular location is the cytoplasm. The enzyme catalyses apo-[ACP] + CoA = holo-[ACP] + adenosine 3',5'-bisphosphate + H(+). Its function is as follows. Transfers the 4'-phosphopantetheine moiety from coenzyme A to a Ser of acyl-carrier-protein. In Campylobacter jejuni subsp. jejuni serotype O:23/36 (strain 81-176), this protein is Holo-[acyl-carrier-protein] synthase.